The following is a 268-amino-acid chain: Tryptophan synthase alpha chain (268 aa).

Active-site proton acceptor residues include Glu-49 and Asp-60.

Belongs to the TrpA family. Tetramer of two alpha and two beta chains.

It carries out the reaction (1S,2R)-1-C-(indol-3-yl)glycerol 3-phosphate + L-serine = D-glyceraldehyde 3-phosphate + L-tryptophan + H2O. It participates in amino-acid biosynthesis; L-tryptophan biosynthesis; L-tryptophan from chorismate: step 5/5. The alpha subunit is responsible for the aldol cleavage of indoleglycerol phosphate to indole and glyceraldehyde 3-phosphate. The sequence is that of Tryptophan synthase alpha chain from Yersinia enterocolitica serotype O:8 / biotype 1B (strain NCTC 13174 / 8081).